Reading from the N-terminus, the 89-residue chain is MTTIRGDDLSNQITQISGSSSKKEEEKKKQQMLTGVLGLQPTMANHPVLGVFLPKYAKQNGGNVDKTAFRLDLIRMLALHRLNTKTGSD.

The segment at 1 to 31 is disordered; the sequence is MTTIRGDDLSNQITQISGSSSKKEEEKKKQQ. Residues 9-18 show a composition bias toward polar residues; the sequence is LSNQITQISG.

It belongs to the herpesviridae small capsomere-interacting protein family. In terms of assembly, interacts with the major capsid protein/MCP.

The protein localises to the virion. The protein resides in the host nucleus. Its function is as follows. Participates in the assembly of the infectious particles by decorating the outer surface of the capsid shell and thus forming a layer between the capsid and the tegument. Complexes composed of the major capsid protein and small capsomere-interacting protein/SCP assemble together in the host cytoplasm and are translocated to the nucleus, where they accumulate and participate in capsid assembly. The sequence is that of Small capsomere-interacting protein from Human herpesvirus 6B (HHV-6 variant B).